Reading from the N-terminus, the 402-residue chain is NADH-quinone oxidoreductase subunit D (402 aa).

It belongs to the complex I 49 kDa subunit family. NDH-1 is composed of 14 different subunits. Subunits NuoB, C, D, E, F, and G constitute the peripheral sector of the complex.

It is found in the cell inner membrane. The enzyme catalyses a quinone + NADH + 5 H(+)(in) = a quinol + NAD(+) + 4 H(+)(out). In terms of biological role, NDH-1 shuttles electrons from NADH, via FMN and iron-sulfur (Fe-S) centers, to quinones in the respiratory chain. The immediate electron acceptor for the enzyme in this species is believed to be ubiquinone. Couples the redox reaction to proton translocation (for every two electrons transferred, four hydrogen ions are translocated across the cytoplasmic membrane), and thus conserves the redox energy in a proton gradient. This Rhodopseudomonas palustris (strain TIE-1) protein is NADH-quinone oxidoreductase subunit D.